A 367-amino-acid polypeptide reads, in one-letter code: NAD(P)H-quinone oxidoreductase subunit 1, chloroplastic (367 aa).

The next 7 helical transmembrane spans lie at 30–50 (LFPILTLVLGITIGVLVIVWL), 98–118 (FSIGPSIAVISIFLSYSVIPF), 127–147 (LSIGVFFWIAISSIAPVGLLM), 164–184 (AAAQSISYEIPLALCVLSISL), 273–293 (LFVTVLYLGGWNLSIPYIFVP), 304–324 (VFGTLIGIFITLAKTYLFLFI), and 340–360 (LLNLGWKFLLPISLGNLLLTT).

The protein belongs to the complex I subunit 1 family. As to quaternary structure, NDH is composed of at least 16 different subunits, 5 of which are encoded in the nucleus.

The protein resides in the plastid. The protein localises to the chloroplast thylakoid membrane. It catalyses the reaction a plastoquinone + NADH + (n+1) H(+)(in) = a plastoquinol + NAD(+) + n H(+)(out). The catalysed reaction is a plastoquinone + NADPH + (n+1) H(+)(in) = a plastoquinol + NADP(+) + n H(+)(out). NDH shuttles electrons from NAD(P)H:plastoquinone, via FMN and iron-sulfur (Fe-S) centers, to quinones in the photosynthetic chain and possibly in a chloroplast respiratory chain. The immediate electron acceptor for the enzyme in this species is believed to be plastoquinone. Couples the redox reaction to proton translocation, and thus conserves the redox energy in a proton gradient. The sequence is that of NAD(P)H-quinone oxidoreductase subunit 1, chloroplastic from Nicotiana tabacum (Common tobacco).